The sequence spans 175 residues: ATP synthase subunit delta (175 aa).

This sequence belongs to the ATPase delta chain family. As to quaternary structure, F-type ATPases have 2 components, F(1) - the catalytic core - and F(0) - the membrane proton channel. F(1) has five subunits: alpha(3), beta(3), gamma(1), delta(1), epsilon(1). F(0) has three main subunits: a(1), b(2) and c(10-14). The alpha and beta chains form an alternating ring which encloses part of the gamma chain. F(1) is attached to F(0) by a central stalk formed by the gamma and epsilon chains, while a peripheral stalk is formed by the delta and b chains.

The protein resides in the cell membrane. F(1)F(0) ATP synthase produces ATP from ADP in the presence of a proton or sodium gradient. F-type ATPases consist of two structural domains, F(1) containing the extramembraneous catalytic core and F(0) containing the membrane proton channel, linked together by a central stalk and a peripheral stalk. During catalysis, ATP synthesis in the catalytic domain of F(1) is coupled via a rotary mechanism of the central stalk subunits to proton translocation. Functionally, this protein is part of the stalk that links CF(0) to CF(1). It either transmits conformational changes from CF(0) to CF(1) or is implicated in proton conduction. This Ruminiclostridium cellulolyticum (strain ATCC 35319 / DSM 5812 / JCM 6584 / H10) (Clostridium cellulolyticum) protein is ATP synthase subunit delta.